Consider the following 1178-residue polypeptide: Pyruvate carboxylase, mitochondrial (1178 aa).

The transit peptide at 1–20 directs the protein to the mitochondrion; the sequence is MLKFQTVRGGLRLLGVRRSS. Lys-35 and Lys-39 each carry N6-acetyllysine. A Biotin carboxylation domain is found at 36-486; that stretch reads PIKKVMVANR…DTQFIDENPE (451 aa). Residue Lys-79 is modified to N6-acetyllysine; alternate. Lys-79 carries the N6-succinyllysine; alternate modification. An N6-acetyllysine mark is found at Lys-148 and Lys-152. Residues Lys-152 and Glu-236 each coordinate ATP. Positions 156-353 constitute an ATP-grasp domain; it reads RAIAIAAGVP…LVHAQIHVSE (198 aa). Lys-241 is subject to N6-acetyllysine. His-271 provides a ligand contact to ATP. An N6-acetyllysine mark is found at Lys-297, Lys-316, and Lys-319. Residue Arg-328 is part of the active site. Lys-434 carries the post-translational modification N6-acetyllysine. Position 442 is an N6-succinyllysine (Lys-442). The 270-residue stretch at 563 to 832 folds into the Pyruvate carboxyltransferase domain; that stretch reads LLLMDTTFRD…DTEVPLERVF (270 aa). 571-575 is a binding site for substrate; sequence RDAHQ. Mn(2+) is bound at residue Asp-572. At Lys-589 the chain carries N6-acetyllysine. A substrate-binding site is contributed by Arg-644. N6-acetyllysine is present on residues Lys-661 and Lys-717. Lys-741 is a Mn(2+) binding site. Lys-741 is subject to N6-carboxylysine. Lys-748 is modified (N6-acetyllysine). 2 residues coordinate Mn(2+): His-771 and His-773. Lys-892 bears the N6-acetyllysine mark. Residue Thr-908 coordinates substrate. Position 969 is an N6-acetyllysine (Lys-969). Lys-988 bears the N6-acetyllysine; alternate mark. Lys-988 carries the N6-succinyllysine; alternate modification. At Lys-992 the chain carries N6-acetyllysine. Thr-1003 is modified (phosphothreonine). 3 positions are modified to N6-acetyllysine: Lys-1061, Lys-1090, and Lys-1124. The region spanning 1109-1178 is the Biotinyl-binding domain; it reads KGQIGAPMPG…EGDDLILEIE (70 aa). Position 1144 is an N6-biotinyllysine (Lys-1144).

As to quaternary structure, homotetramer. Interacts (via the biotin carboxylation domain) with SIRT4. It depends on biotin as a cofactor. Mn(2+) serves as cofactor. Post-translationally, acetylation of Lys-748 might play a role in catalytic activity regulation.

The protein resides in the mitochondrion matrix. The enzyme catalyses hydrogencarbonate + pyruvate + ATP = oxaloacetate + ADP + phosphate + H(+). It participates in carbohydrate biosynthesis; gluconeogenesis. In terms of biological role, pyruvate carboxylase catalyzes a 2-step reaction, involving the ATP-dependent carboxylation of the covalently attached biotin in the first step and the transfer of the carboxyl group to pyruvate in the second. Catalyzes in a tissue specific manner, the initial reactions of glucose (liver, kidney) and lipid (adipose tissue, liver, brain) synthesis from pyruvate. In Rattus norvegicus (Rat), this protein is Pyruvate carboxylase, mitochondrial (Pc).